A 638-amino-acid polypeptide reads, in one-letter code: Sodium- and chloride-dependent glycine transporter 1 (638 aa).

The tract at residues 1–29 (MAAAQGPVAPSSLEQNGAVPSEATKKDQN) is disordered. Residues 1–40 (MAAAQGPVAPSSLEQNGAVPSEATKKDQNLKRGNWGNQIE) lie on the Cytoplasmic side of the membrane. 3 helical membrane passes run 41 to 61 (FVLT…FPYL), 69 to 88 (AFMF…LFFM), and 112 to 132 (GVGY…NVVI). Residues 133–219 (CIAFYYFFSS…DDIGNFGEVR (87 aa)) lie on the Extracellular side of the membrane. N169, N172, N182, and N188 each carry an N-linked (GlcNAc...) asparagine glycan. A run of 9 helical transmembrane segments spans residues 220–238 (LPLL…LCLI), 247–264 (VVYF…ILFI), 300–317 (IFYS…MASY), 329–350 (VIIS…FSIL), 383–402 (LPIS…LLGL), 431–449 (YVTL…PLTS), 465–485 (SFSL…IYGH), 506–525 (ICWR…FSVI), and 544–562 (IGFL…YALF). The Cytoplasmic portion of the chain corresponds to 563 to 638 (QFCRTDGDTL…GSSRFQDSRI (76 aa)). A disordered region spans residues 597-638 (RYAPTTTPSPEDGLEVQPLHPDKAQIPMVGSNGSSRFQDSRI). Residue T603 is modified to Phosphothreonine. Phosphoserine is present on residues S605 and S630. Residues 627–638 (SNGSSRFQDSRI) form an essential for interaction with EXOC1 region. The segment covering 627–638 (SNGSSRFQDSRI) has biased composition (polar residues).

This sequence belongs to the sodium:neurotransmitter symporter (SNF) (TC 2.A.22) family. SLC6A9 subfamily. In terms of assembly, interacts with EXOC1; interaction increases the transporter capacity of SLC6A9 probably by promoting its insertion into the cell membrane. Interacts with EXOC3 and EXOC4.

Its subcellular location is the cell membrane. It carries out the reaction glycine(out) + chloride(out) + 2 Na(+)(out) = glycine(in) + chloride(in) + 2 Na(+)(in). Sodium- and chloride-dependent glycine transporter which is essential for regulating glycine concentrations at inhibitory glycinergic synapses. In Bos taurus (Bovine), this protein is Sodium- and chloride-dependent glycine transporter 1 (SLC6A9).